The chain runs to 114 residues: Large ribosomal subunit protein uL18 (114 aa).

Belongs to the universal ribosomal protein uL18 family. Part of the 50S ribosomal subunit; part of the 5S rRNA/L5/L18/L25 subcomplex. Contacts the 5S and 23S rRNAs.

This is one of the proteins that bind and probably mediate the attachment of the 5S RNA into the large ribosomal subunit, where it forms part of the central protuberance. In Bacteroides thetaiotaomicron (strain ATCC 29148 / DSM 2079 / JCM 5827 / CCUG 10774 / NCTC 10582 / VPI-5482 / E50), this protein is Large ribosomal subunit protein uL18.